Consider the following 193-residue polypeptide: Holliday junction branch migration complex subunit RuvA (193 aa).

The segment at 1–64 is domain I; that stretch reads MIGRIAGVLL…EDAHLLYGFG (64 aa). The interval 65 to 139 is domain II; that stretch reads TAEERSTFRE…GKIGADLGAM (75 aa). A flexible linker region spans residues 139–143; it reads MAGAA. The interval 144 to 193 is domain III; that stretch reads SASDHASDILNALLALGYSEKEALAAVKNVPAGTGVSEGIKLALKALSKG.

Belongs to the RuvA family. As to quaternary structure, homotetramer. Forms an RuvA(8)-RuvB(12)-Holliday junction (HJ) complex. HJ DNA is sandwiched between 2 RuvA tetramers; dsDNA enters through RuvA and exits via RuvB. An RuvB hexamer assembles on each DNA strand where it exits the tetramer. Each RuvB hexamer is contacted by two RuvA subunits (via domain III) on 2 adjacent RuvB subunits; this complex drives branch migration. In the full resolvosome a probable DNA-RuvA(4)-RuvB(12)-RuvC(2) complex forms which resolves the HJ.

The protein localises to the cytoplasm. Its function is as follows. The RuvA-RuvB-RuvC complex processes Holliday junction (HJ) DNA during genetic recombination and DNA repair, while the RuvA-RuvB complex plays an important role in the rescue of blocked DNA replication forks via replication fork reversal (RFR). RuvA specifically binds to HJ cruciform DNA, conferring on it an open structure. The RuvB hexamer acts as an ATP-dependent pump, pulling dsDNA into and through the RuvAB complex. HJ branch migration allows RuvC to scan DNA until it finds its consensus sequence, where it cleaves and resolves the cruciform DNA. This Paraburkholderia xenovorans (strain LB400) protein is Holliday junction branch migration complex subunit RuvA.